Reading from the N-terminus, the 391-residue chain is Carbamoyl phosphate synthase small chain (391 aa).

The CPSase stretch occupies residues 1–187 (MAGVKERAVL…PLPYAWPTLK (187 aa)). Positions 50, 239, and 241 each coordinate L-glutamine. The 186-residue stretch at 191-376 (RIVVMDFGIK…LEEVEAFHGA (186 aa)) folds into the Glutamine amidotransferase type-1 domain. Cys-266 serves as the catalytic Nucleophile. Residues Leu-267, Gln-270, Asn-308, Gly-310, and Tyr-311 each contribute to the L-glutamine site. Residues His-349 and Glu-351 contribute to the active site.

It belongs to the CarA family. Composed of two chains; the small (or glutamine) chain promotes the hydrolysis of glutamine to ammonia, which is used by the large (or ammonia) chain to synthesize carbamoyl phosphate. Tetramer of heterodimers (alpha,beta)4.

The enzyme catalyses hydrogencarbonate + L-glutamine + 2 ATP + H2O = carbamoyl phosphate + L-glutamate + 2 ADP + phosphate + 2 H(+). It catalyses the reaction L-glutamine + H2O = L-glutamate + NH4(+). Its pathway is amino-acid biosynthesis; L-arginine biosynthesis; carbamoyl phosphate from bicarbonate: step 1/1. The protein operates within pyrimidine metabolism; UMP biosynthesis via de novo pathway; (S)-dihydroorotate from bicarbonate: step 1/3. Small subunit of the glutamine-dependent carbamoyl phosphate synthetase (CPSase). CPSase catalyzes the formation of carbamoyl phosphate from the ammonia moiety of glutamine, carbonate, and phosphate donated by ATP, constituting the first step of 2 biosynthetic pathways, one leading to arginine and/or urea and the other to pyrimidine nucleotides. The small subunit (glutamine amidotransferase) binds and cleaves glutamine to supply the large subunit with the substrate ammonia. This Thermus thermophilus (strain ATCC BAA-163 / DSM 7039 / HB27) protein is Carbamoyl phosphate synthase small chain.